The primary structure comprises 87 residues: UPF0250 protein ETA_23570 (87 aa).

It belongs to the UPF0250 family.

The sequence is that of UPF0250 protein ETA_23570 from Erwinia tasmaniensis (strain DSM 17950 / CFBP 7177 / CIP 109463 / NCPPB 4357 / Et1/99).